Reading from the N-terminus, the 176-residue chain is Oleosin Ara h 14.0102 (176 aa).

Alanine 2 is modified (N-acetylalanine; alternate). The next 2 membrane-spanning stretches (helical) occupy residues 61–81 (GTLL…LAIA) and 87–107 (FFSP…IGIL). Residues 156–176 (KTKDAGQEIQTKAQDVKRSSS) form a disordered region.

This sequence belongs to the oleosin family. As to quaternary structure, homodimer. Forms oligomers. Expressed in seeds (at protein level). Not expressed in leaves.

The protein resides in the lipid droplet. It is found in the membrane. Its function is as follows. May have a structural role to stabilize the lipid body during desiccation of the seed by preventing coalescence of the oil. Probably interacts with both lipid and phospholipid moieties of lipid bodies. May also provide recognition signals for specific lipase anchorage in lipolysis during seedling growth. This Arachis hypogaea (Peanut) protein is Oleosin Ara h 14.0102.